The sequence spans 769 residues: Discoidin, CUB and LCCL domain-containing protein 2 (769 aa).

The span at 1–29 (MASRAPLRAARSPQDPGGRAAPAATGRAP) shows a compositional bias: low complexity. The segment at 1-39 (MASRAPLRAARSPQDPGGRAAPAATGRAPLPSAGWCPLP) is disordered. Residues 1–63 (MASRAPLRAA…LLLLLPDAGA (63 aa)) form the signal peptide. The Extracellular segment spans residues 64-523 (QKGDGCGHTV…VTPSVTKDVA (460 aa)). 2 cysteine pairs are disulfide-bonded: Cys-69/Cys-96 and Cys-123/Cys-145. The region spanning 69–184 (CGHTVLGPES…RGFLASYSVI (116 aa)) is the CUB domain. Asn-92 is a glycosylation site (N-linked (GlcNAc...) asparagine). Asn-152 is a glycosylation site (N-linked (GlcNAc...) asparagine). One can recognise an LCCL domain in the interval 184 to 282 (IDKQDLITCL…MVGYLSTSLF (99 aa)). The cysteines at positions 212 and 234 are disulfide-linked. Asn-269 carries N-linked (GlcNAc...) asparagine glycosylation. Cysteines 289 and 446 form a disulfide. The 158-residue stretch at 289-446 (CYGTLGMESG…IAMKVELLGC (158 aa)) folds into the F5/8 type C domain. The segment at 455–476 (PKLTQPPPPRNSNNLKNTTVHP) is disordered. A compositionally biased stretch (polar residues) spans 465–474 (NSNNLKNTTV). Asn-471 and Asn-511 each carry an N-linked (GlcNAc...) asparagine glycan. Residues 524–544 (LAAVLVPVLVMALTTLILILV) form a helical membrane-spanning segment. Over 545–769 (CAWHWRNRKK…EKFDAFKETL (225 aa)) the chain is Cytoplasmic. At Ser-601 the chain carries Phosphoserine. Residues 719–769 (SCSSGQAQYDTPKGGKPAAAPEELVYQVPQSTQEASGAGRDEKFDAFKETL) form a disordered region. Residues 757 to 769 (GRDEKFDAFKETL) show a composition bias toward basic and acidic residues.

Its subcellular location is the membrane. This chain is Discoidin, CUB and LCCL domain-containing protein 2 (Dcbld2), found in Rattus norvegicus (Rat).